The primary structure comprises 398 residues: Acetate kinase (398 aa).

Asn7 lines the Mg(2+) pocket. Position 14 (Lys14) interacts with ATP. Position 91 (Arg91) interacts with substrate. The active-site Proton donor/acceptor is the Asp148. ATP contacts are provided by residues 208-212 (HLGNG), 283-285 (DFR), and 331-335 (GLGEN). Residue Glu384 coordinates Mg(2+).

This sequence belongs to the acetokinase family. Homodimer. Mg(2+) serves as cofactor. Mn(2+) is required as a cofactor.

It is found in the cytoplasm. It catalyses the reaction acetate + ATP = acetyl phosphate + ADP. It functions in the pathway metabolic intermediate biosynthesis; acetyl-CoA biosynthesis; acetyl-CoA from acetate: step 1/2. Its function is as follows. Catalyzes the formation of acetyl phosphate from acetate and ATP. Can also catalyze the reverse reaction. The sequence is that of Acetate kinase from Natranaerobius thermophilus (strain ATCC BAA-1301 / DSM 18059 / JW/NM-WN-LF).